We begin with the raw amino-acid sequence, 411 residues long: MRIYTVGGAVRDRLLGLPVKDRDHVVVGSTPEAMVQLGYRPVGKDFPVFLHPVTHEEYALARTERKTGKGYKGFQVHADPEVTLEQDLARRDLTINAIAEDEHGNLIDPYHGVADLHAKVLRHVSPAFCEDPVRILRVARFAARFVEFSVADETMTLMRHMVEDGEVDALVPERVWQELAKGLMEQRPSRMFEVLRACGALKRLLPELDRLFGVPQTAKYHPEIDTGVHVMLVIDYAARAGFSLPVRFAALTHDLGKGTTPAHILPRHIGHEERSVELLQSLVKRLRVPNDCKDLALLVAKHHGKVHQVGEMKAATVLRFLQETDALRQPGRFRDFLSACEADARGRTGFEQQALPLFPLLLEILQLVRTVDAGAIAREQSSPDAIKEAVFSARVAAMEAAYRFPLKEAVG.

Residues G8 and R11 each coordinate ATP. The CTP site is built by G8 and R11. The Mg(2+) site is built by D21 and D23. Residues R91, R137, and R140 each coordinate ATP. Residues R91, R137, and R140 each contribute to the CTP site. The 102-residue stretch at 226–327 (TGVHVMLVID…LRFLQETDAL (102 aa)) folds into the HD domain.

The protein belongs to the tRNA nucleotidyltransferase/poly(A) polymerase family. Bacterial CCA-adding enzyme type 1 subfamily. In terms of assembly, monomer. Can also form homodimers and oligomers. It depends on Mg(2+) as a cofactor. Requires Ni(2+) as cofactor.

It catalyses the reaction a tRNA precursor + 2 CTP + ATP = a tRNA with a 3' CCA end + 3 diphosphate. It carries out the reaction a tRNA with a 3' CCA end + 2 CTP + ATP = a tRNA with a 3' CCACCA end + 3 diphosphate. In terms of biological role, catalyzes the addition and repair of the essential 3'-terminal CCA sequence in tRNAs without using a nucleic acid template. Adds these three nucleotides in the order of C, C, and A to the tRNA nucleotide-73, using CTP and ATP as substrates and producing inorganic pyrophosphate. tRNA 3'-terminal CCA addition is required both for tRNA processing and repair. Also involved in tRNA surveillance by mediating tandem CCA addition to generate a CCACCA at the 3' terminus of unstable tRNAs. While stable tRNAs receive only 3'-terminal CCA, unstable tRNAs are marked with CCACCA and rapidly degraded. The protein is Multifunctional CCA protein of Methylobacillus flagellatus (strain ATCC 51484 / DSM 6875 / VKM B-1610 / KT).